The chain runs to 616 residues: uncharacterized protein (616 aa).

It belongs to the UbiD family.

This is an uncharacterized protein from Helicobacter pylori (strain ATCC 700392 / 26695) (Campylobacter pylori).